Here is a 492-residue protein sequence, read N- to C-terminus: Trk system potassium uptake protein TrkI (492 aa).

Transmembrane regions (helical) follow at residues 20 to 40, 47 to 67, 81 to 101, 143 to 163, 196 to 216, 246 to 266, 282 to 302, 334 to 354, 403 to 423, and 465 to 485; these read VLAV…LVLI, ALAF…SWIV, FVLT…PLVL, IMQW…LPFL, IYCG…MSPL, QLLW…VLYI, VQGL…WRVS, AWGA…GCSG, VVAF…GLSL, and WLLC…LVLL.

This sequence belongs to the TrkH potassium transport family.

It is found in the cell inner membrane. Its function is as follows. Medium-affinity potassium transport system. Probably interacts with Trk system potassium uptake protein TrkA. Main K(+) transporter in osmotically adapted cells. The polypeptide is Trk system potassium uptake protein TrkI (trkI) (Halomonas elongata (strain ATCC 33173 / DSM 2581 / NBRC 15536 / NCIMB 2198 / 1H9)).